The primary structure comprises 119 residues: Immunoglobulin lambda variable 4-69 (119 aa).

The first 20 residues, 1–20 (MAWTPLLFLTLLLHCTGSLS), serve as a signal peptide directing secretion. Residues 21-45 (QLVLTQSPSASASLGASVKLTCTLS) are framework-1. The region spanning 21-119 (QLVLTQSPSA…YYCQTWGTGI (99 aa)) is the Ig-like domain. Residues C42 and C112 are joined by a disulfide bond. Residues 46-52 (SGHSSYA) are complementarity-determining-1. The framework-2 stretch occupies residues 53 to 69 (IAWHQQQPEKGPRYLMK). A complementarity-determining-2 region spans residues 70 to 76 (LNSDGSH). The tract at residues 73 to 92 (DGSHSKGDGIPDRFSGSSSG) is disordered. The tract at residues 77–112 (SKGDGIPDRFSGSSSGAERYLTISSLQSEDEADYYC) is framework-3. The interval 113 to 119 (QTWGTGI) is complementarity-determining-3.

Immunoglobulins are composed of two identical heavy chains and two identical light chains; disulfide-linked.

Its subcellular location is the secreted. It localises to the cell membrane. V region of the variable domain of immunoglobulin light chains that participates in the antigen recognition. Immunoglobulins, also known as antibodies, are membrane-bound or secreted glycoproteins produced by B lymphocytes. In the recognition phase of humoral immunity, the membrane-bound immunoglobulins serve as receptors which, upon binding of a specific antigen, trigger the clonal expansion and differentiation of B lymphocytes into immunoglobulins-secreting plasma cells. Secreted immunoglobulins mediate the effector phase of humoral immunity, which results in the elimination of bound antigens. The antigen binding site is formed by the variable domain of one heavy chain, together with that of its associated light chain. Thus, each immunoglobulin has two antigen binding sites with remarkable affinity for a particular antigen. The variable domains are assembled by a process called V-(D)-J rearrangement and can then be subjected to somatic hypermutations which, after exposure to antigen and selection, allow affinity maturation for a particular antigen. The protein is Immunoglobulin lambda variable 4-69 of Homo sapiens (Human).